We begin with the raw amino-acid sequence, 2347 residues long: Proto-oncogene tyrosine-protein kinase ROS (2347 aa).

Positions 1–27 (MKNIYCLIPKLVNFATLGCLWISVVQC) are cleaved as a signal peptide. The Extracellular portion of the chain corresponds to 28–1859 (TVLNSCLKSC…LVGDDFWIPE (1832 aa)). N52, N114, and N123 each carry an N-linked (GlcNAc...) asparagine glycan. Fibronectin type-III domains lie at 101–196 (LPTA…VPET) and 197–285 (APLI…SSSA). 27 N-linked (GlcNAc...) asparagine glycosylation sites follow: N324, N352, N396, N471, N607, N628, N706, N714, N732, N939, N961, N1015, N1087, N1090, N1095, N1211, N1272, N1330, N1458, N1461, N1474, N1499, N1565, N1669, N1715, N1738, and N1808. In terms of domain architecture, Fibronectin type-III 3 spans 557-671 (LPGRPQELSV…EPSVGTTLVP (115 aa)). Fibronectin type-III domains follow at residues 947–1042 (IPDS…TVPS) and 1043–1150 (APEN…TSEI). 4 Fibronectin type-III domains span residues 1450–1556 (DTVE…TKNG), 1557–1656 (VPEA…VEMF), 1658–1751 (TPEK…TKAG), and 1752–1854 (VPNK…VGDD). Residues 1860-1882 (TSFILTIIVGIFLVVTIPLTFVW) traverse the membrane as a helical segment. Residues 1883 to 2347 (HRRLKNQKSA…THSGYGDGSD (465 aa)) lie on the Cytoplasmic side of the membrane. A Protein kinase domain is found at 1945–2222 (LTLRLLLGSG…DQLQLFRNFF (278 aa)). Residues 1951 to 1959 (LGSGAFGEV) and K1980 each bind ATP. D2079 functions as the Proton acceptor in the catalytic mechanism. Y2274 carries the phosphotyrosine; by autocatalysis modification. Residues 2284-2311 (GEEKSEGPLGSQESESCGLRKEEKEPHA) form a disordered region. A compositionally biased stretch (basic and acidic residues) spans 2301-2311 (GLRKEEKEPHA). Residue Y2334 is modified to Phosphotyrosine; by autocatalysis.

The protein belongs to the protein kinase superfamily. Tyr protein kinase family. Insulin receptor subfamily. Interacts with PTPN6 (via SH2 1 domain); the interaction is direct and promotes ROS1 dephosphorylation. Interacts with PTPN11; may activate the PI3 kinase-mTOR signaling pathway. Interacts with VAV3; constitutive interaction mediating VAV3 phosphorylation. Phosphorylated. Probably autophosphorylates. Phosphorylation at Tyr-2274 is required for the interaction with PTPN6 that mediates ROS1 dephosphorylation. Phosphorylation at Tyr-2274 stimulates the kinase activity and the activation of the ERK1 signaling cascade. Phosphorylation at Tyr-2274 and/or Tyr-2334 recruits PTPN11. As to expression, expressed in brain. Expression is increased in primary gliomas.

It localises to the cell membrane. It carries out the reaction L-tyrosyl-[protein] + ATP = O-phospho-L-tyrosyl-[protein] + ADP + H(+). With respect to regulation, inhibited by dephosphorylation by PTPN6. Receptor tyrosine kinase (RTK) that plays a role in epithelial cell differentiation and regionalization of the proximal epididymal epithelium. NELL2 is an endogenous ligand for ROS1. Upon endogenous stimulation by NELL2, ROS1 activates the intracellular signaling pathway and triggers epididymal epithelial differentiation and subsequent sperm maturation. May activate several downstream signaling pathways related to cell differentiation, proliferation, growth and survival including the PI3 kinase-mTOR signaling pathway. Mediates the phosphorylation of PTPN11, an activator of this pathway. May also phosphorylate and activate the transcription factor STAT3 to control anchorage-independent cell growth. Mediates the phosphorylation and the activation of VAV3, a guanine nucleotide exchange factor regulating cell morphology. May activate other downstream signaling proteins including AKT1, MAPK1, MAPK3, IRS1 and PLCG2. This is Proto-oncogene tyrosine-protein kinase ROS (ROS1) from Homo sapiens (Human).